The following is a 436-amino-acid chain: Serine protease inhibitor A6 (436 aa).

The first 16 residues, 1 to 16 (MHLLVYLSLFFALALA), serve as a signal peptide directing secretion. Positions 26-60 (KHRHRHEQQGHHDSAKHGHQKDKQQQEQIKNDEGK) are disordered. Over residues 32 to 60 (EQQGHHDSAKHGHQKDKQQQEQIKNDEGK) the composition is skewed to basic and acidic residues. Residues Asn-260 and Asn-289 are each glycosylated (N-linked (GlcNAc...) asparagine).

The protein belongs to the serpin family. As to expression, liver.

It is found in the secreted. The protein resides in the extracellular space. In terms of biological role, not yet known. In Xenopus laevis (African clawed frog), this protein is Serine protease inhibitor A6 (serpina6).